Consider the following 735-residue polypeptide: Lebercilin-like protein (735 aa).

Disordered stretches follow at residues 12 to 54 and 91 to 115; these read TEAH…NGSV and EKPL…RGQK. Residues 43–53 are compositionally biased toward low complexity; the sequence is QSQNSQASNGS. A coiled-coil region spans residues 205–335; the sequence is TAKHQNEVKN…QQKLKEKDRE (131 aa). Disordered regions lie at residues 356–379, 473–597, 632–657, and 685–735; these read YPKV…NMRH, SKEV…PRKH, KHRS…AGAR, and GRAG…KTVV. Basic and acidic residues predominate over residues 487-525; it reads TPRRPKENKEDQEKRAIPAEAEPTAKESEAHKDAEDKAL. The segment covering 528–541 has biased composition (low complexity); it reads AAGNAGDAGDAGDA. Composition is skewed to basic and acidic residues over residues 542–553, 573–588, and 632–641; these read GNDREVVGEHKV, EVHG…EPGR, and KHRSEQELRL. Over residues 689–707 the composition is skewed to polar residues; it reads SSDSEAVSKSPQTGPQASA.

Belongs to the LCA5 family.

This chain is Lebercilin-like protein, found in Mus musculus (Mouse).